We begin with the raw amino-acid sequence, 562 residues long: MATMNLPTGLHVAAKPASLDRLSSAKNVGDLFFSDSRHRKRVNTSNQIMAVQSLEHIHGVNNNVYANYVNFNVPSSGYSLGQESVYLNSPRKTKIVCTIGPSTSSREMIWKLAEAGMNVARLNMSHGDHASHQRTIDLVKEYNAQFEDKVIAIMLDTKGPEVISGDVPKPILLKEGQEFNFSIKRGVSTEDTVSVNYDDFINDVEAGDILLVDGGMMSLAVKSKTSDIVKCEVIDGGELKSRRHLNVRGKSATLPSITEKDWDDIKFGVNNQVDFYAVSFVKDAKVVHELKDYLKSCNADIHVIVKIESADSIPNLHSIISASDGAMVARGDLGAELPIEEVPLLQEDIIRRCQSMQKPVIVATNMLESMIDHPTPTRAEVSDISIAVREGADAVMLSGETAHGKYPLKAVKVMHIVALRTESSLQKSTSSPSQSAAYKSHMGEMFAFHSSSMANTLSTPIIVFTRTGSMAIILSHNRPSSTVFAFTNNERVKQRLALYHGVVPIYMEFSSDAEETFSRAIKLLLSKSLVKDGQYVTLVQSGAQPIWRRHSTHHIQVRKVQS.

Residue R121 participates in substrate binding. Residues N123, S125, D156, and T157 each contribute to the K(+) site. 123 to 126 (NMSH) contacts ATP. E308 is a Mg(2+) binding site. 3 residues coordinate substrate: G331, D332, and T364. Mg(2+) is bound at residue D332.

This sequence belongs to the pyruvate kinase family. As to quaternary structure, homotetramer. Mg(2+) is required as a cofactor. Requires K(+) as cofactor. Highest levels in leaves. Also found in stems, roots and flowers.

Its subcellular location is the plastid. It is found in the chloroplast. It catalyses the reaction pyruvate + ATP = phosphoenolpyruvate + ADP + H(+). It functions in the pathway carbohydrate degradation; glycolysis; pyruvate from D-glyceraldehyde 3-phosphate: step 5/5. This Nicotiana tabacum (Common tobacco) protein is Pyruvate kinase isozyme G, chloroplastic.